A 687-amino-acid chain; its full sequence is POZ-, AT hook-, and zinc finger-containing protein 1 (687 aa).

The region spanning 41-130 is the BTB domain; it reads CDVLLRVGDE…AYTSRIVVRL (90 aa). A Glycyl lysine isopeptide (Lys-Gly) (interchain with G-Cter in SUMO2) cross-link involves residue lysine 112. Positions 250-260 are enriched in low complexity; the sequence is PFPSVASSAPP. The interval 250–278 is disordered; the sequence is PFPSVASSAPPLTGKRGRGRPRKANLLDS. The segment at residues 264 to 276 is a DNA-binding region (a.T hook); sequence KRGRGRPRKANLL. Lysine 272 participates in a covalent cross-link: Glycyl lysine isopeptide (Lys-Gly) (interchain with G-Cter in SUMO2). Serine 282 is subject to Phosphoserine. The segment at 292–314 adopts a C2H2-type 1 zinc-finger fold; that stretch reads LPCGLCGKVFTDANRLRQHEAQH. The segment at 332 to 351 is disordered; that stretch reads GENGLPISEDPDGPRKRSRT. 5 consecutive C2H2-type zinc fingers follow at residues 355 to 377, 383 to 405, 413 to 436, 442 to 464, and 495 to 518; these read VACE…KLSH, YSCP…VRSH, YICQ…KQVH, HKCQ…LACH, and NFCS…KTHH. Residues 549–558 show a composition bias toward basic and acidic residues; the sequence is EGQKCSHQDP. The tract at residues 549–603 is disordered; that stretch reads EGQKCSHQDPIESSDSYGDLSDASDLKTPEKQSANGSFSCDMAVPKNKMESDGEK. The segment at 605–628 adopts a C2H2-type 7 zinc-finger fold; that stretch reads YPCPECGSFFRSKSYLNKHIQKVH.

It belongs to the krueppel C2H2-type zinc-finger protein family. In terms of assembly, homodimer. Interacts with RNF4. Interacts (via C-terminus) with TP53; this interaction inhibits TP53 ability to activate transcription. Ubiquitous.

The protein resides in the nucleus. Its function is as follows. Transcriptional regulator that plays a role in many biological processes such as embryogenesis, senescence, T-cell development or neurogenesis. Interacts with the TP53 protein to control genes that are important in proliferation and in the DNA-damage response. Mechanistically, the interaction inhibits the DNA binding and transcriptional activity of TP53/p53. Part of the transcriptional network modulating regulatory T-cell development and controls the generation of the regulatory T-cell pool under homeostatic conditions. (Microbial infection) Plays a positive role in viral cDNA synthesis. In Homo sapiens (Human), this protein is POZ-, AT hook-, and zinc finger-containing protein 1 (PATZ1).